The sequence spans 599 residues: ATP-binding cassette sub-family E member 1 (599 aa).

2 4Fe-4S ferredoxin-type domains span residues 7–37 and 46–75; these read RIAIVNHDKCKPKKCRQECKKSCPVVRMGKL and KIAWISETLCIGCGICIKKCPFGALSIVNL. A Glycyl lysine isopeptide (Lys-Gly) (interchain with G-Cter in ubiquitin) cross-link involves residue Lys-20. ABC transporter domains follow at residues 79–315 and 342–562; these read LEKE…FLDG and VKKM…LSQL. Residues 110-117 and 379-386 contribute to the ATP site; these read GTNGIGKS and GENGTGKT. Ser-417 carries the phosphoserine modification. Thr-550 bears the Phosphothreonine mark.

It belongs to the ABC transporter superfamily. ABCE family. (Microbial infection) Interacts with Chandipura virus matrix protein. In terms of assembly, interacts with PINK1. Interacts with CNOT4. Interacts with PELO. Probably heterodimerizes with RNASEL; this interaction inhibits RNASEL. As to quaternary structure, (Microbial infection) Interacts with HIV-1 proteins Vif and Gag. (Microbial infection) Interacts with HIV-2 protein Gag. In terms of processing, ubiquitinated by CNOT4. Ubiquitination mediates the recruitment of autophagy receptors to the mitochondrial outer membrane and initiates mitophagy.

It localises to the cytoplasm. The protein localises to the mitochondrion. The enzyme catalyses GTP + H2O = GDP + phosphate + H(+). It catalyses the reaction ATP + H2O = ADP + phosphate + H(+). The catalysed reaction is CTP + H2O = CDP + phosphate + H(+). It carries out the reaction UTP + H2O = UDP + phosphate + H(+). Its function is as follows. Nucleoside-triphosphatase (NTPase) involved in ribosome recycling by mediating ribosome disassembly. Able to hydrolyze ATP, GTP, UTP and CTP. Splits ribosomes into free 60S subunits and tRNA- and mRNA-bound 40S subunits. Acts either after canonical termination facilitated by release factors (ETF1/eRF1) or after recognition of stalled and vacant ribosomes by mRNA surveillance factors (PELO/Pelota). Involved in the No-Go Decay (NGD) pathway: recruited to stalled ribosomes by the Pelota-HBS1L complex, and drives the disassembly of stalled ribosomes, followed by degradation of damaged mRNAs as part of the NGD pathway. Also plays a role in quality control of translation of mitochondrial outer membrane-localized mRNA. As part of the PINK1-regulated signaling, ubiquitinated by CNOT4 upon mitochondria damage; this modification generates polyubiquitin signals that recruit autophagy receptors to the mitochondrial outer membrane and initiate mitophagy. RNASEL-specific protein inhibitor which antagonizes the binding of 2-5A (5'-phosphorylated 2',5'-linked oligoadenylates) to RNASEL. Negative regulator of the anti-viral effect of the interferon-regulated 2-5A/RNASEL pathway. Functionally, (Microbial infection) May act as a chaperone for post-translational events during HIV-1 capsid assembly. (Microbial infection) Plays a role in the down-regulation of the 2-5A/RNASEL pathway during encephalomyocarditis virus (EMCV) and HIV-1 infections. In Homo sapiens (Human), this protein is ATP-binding cassette sub-family E member 1 (ABCE1).